Here is a 222-residue protein sequence, read N- to C-terminus: Gamma-glutamylcyclotransferase and putative RNase MJ0434 (222 aa).

The active site involves arginine 75. The RX(4)HXY motif signature appears at 75–82 (RDILIRKY). Tyrosine 82 is subject to O-di-AMP-tyrosine.

It in the N-terminal section; belongs to the HepT RNase toxin family. This sequence in the C-terminal section; belongs to the gamma-glutamylcyclotransferase family. As to quaternary structure, homodimer, probably forms a complex with cognate antitoxin MJ0435. Post-translationally, modified by cognate antitoxin MJ0435; probably at least 2 successive AMPylation events occur on Tyr-82.

In terms of biological role, probable toxic component of a putative type VII toxin-antitoxin (TA) system, probably an RNase. Probably neutralized by cognate antitoxin MJ0435. Neutralization may be due to AMPylation by MJ0435. The polypeptide is Gamma-glutamylcyclotransferase and putative RNase MJ0434 (Methanocaldococcus jannaschii (strain ATCC 43067 / DSM 2661 / JAL-1 / JCM 10045 / NBRC 100440) (Methanococcus jannaschii)).